The primary structure comprises 159 residues: Small ribosomal subunit protein uS4 (159 aa).

Residues 106 to 158 (RRLQTIVYRKGLAKSIYHARQLVVHGHVAVAGRRVTSPGFLVPRDLEDKITLI) form the S4 RNA-binding domain.

Belongs to the universal ribosomal protein uS4 family. Part of the 30S ribosomal subunit. Contacts protein S5. The interaction surface between S4 and S5 is involved in control of translational fidelity.

In terms of biological role, one of the primary rRNA binding proteins, it binds directly to 16S rRNA where it nucleates assembly of the body of the 30S subunit. With S5 and S12 plays an important role in translational accuracy. In Pyrobaculum islandicum (strain DSM 4184 / JCM 9189 / GEO3), this protein is Small ribosomal subunit protein uS4.